A 215-amino-acid polypeptide reads, in one-letter code: Ankyrin repeat domain-containing protein 49 (215 aa).

2 ANK repeats span residues 81 to 110 and 114 to 143; these read DGYT…NPNA and LGWT…DVNA.

As to quaternary structure, interacts with Bdbt; interaction promotes the stability of both complex members.

It is found in the cytoplasm. It localises to the cytosol. Its subcellular location is the cell membrane. In terms of biological role, required for regulating the establishment of planar cell polarity in the wing. Forms a complex with Bdbt which likely functions in the regulation of planar polarity by promoting the activity of Dco during planar polarity establishment. Within the complex, probably functions to stabilize Bdbt, while Bdbt directly promotes Dco activity in regulating phosphorylation of core proteins such as dsh, and asymmetric localization. The polypeptide is Ankyrin repeat domain-containing protein 49 (Drosophila melanogaster (Fruit fly)).